Reading from the N-terminus, the 401-residue chain is Large ribosomal subunit protein uL4 (401 aa).

It belongs to the universal ribosomal protein uL4 family.

The chain is Large ribosomal subunit protein uL4 (RpL4) from Drosophila melanogaster (Fruit fly).